The sequence spans 264 residues: Thiazole synthase (264 aa).

The active-site Schiff-base intermediate with DXP is the K106. Residues G167, 193–194, and 215–216 contribute to the 1-deoxy-D-xylulose 5-phosphate site; these read AG and NS.

This sequence belongs to the ThiG family. In terms of assembly, homotetramer. Forms heterodimers with either ThiH or ThiS.

It is found in the cytoplasm. The catalysed reaction is [ThiS sulfur-carrier protein]-C-terminal-Gly-aminoethanethioate + 2-iminoacetate + 1-deoxy-D-xylulose 5-phosphate = [ThiS sulfur-carrier protein]-C-terminal Gly-Gly + 2-[(2R,5Z)-2-carboxy-4-methylthiazol-5(2H)-ylidene]ethyl phosphate + 2 H2O + H(+). It participates in cofactor biosynthesis; thiamine diphosphate biosynthesis. In terms of biological role, catalyzes the rearrangement of 1-deoxy-D-xylulose 5-phosphate (DXP) to produce the thiazole phosphate moiety of thiamine. Sulfur is provided by the thiocarboxylate moiety of the carrier protein ThiS. In vitro, sulfur can be provided by H(2)S. The chain is Thiazole synthase from Pseudomonas fluorescens (strain Pf0-1).